The following is a 434-amino-acid chain: Enolase (434 aa).

Positions 29 to 56 (SGHTGRAAVPSGASTGSREALEMRDGDK) are disordered. The segment covering 47-56 (EALEMRDGDK) has biased composition (basic and acidic residues). Gln-163 provides a ligand contact to (2R)-2-phosphoglycerate. Glu-205 serves as the catalytic Proton donor. Mg(2+) is bound by residues Asp-242, Glu-285, and Asp-312. The (2R)-2-phosphoglycerate site is built by Lys-337, Arg-366, Ser-367, and Lys-388. Lys-337 functions as the Proton acceptor in the catalytic mechanism.

It belongs to the enolase family. In terms of assembly, homooctamer. Requires Mg(2+) as cofactor.

The protein localises to the cytoplasm. It is found in the secreted. The protein resides in the cell surface. The catalysed reaction is (2R)-2-phosphoglycerate = phosphoenolpyruvate + H2O. Its pathway is carbohydrate degradation; glycolysis; pyruvate from D-glyceraldehyde 3-phosphate: step 4/5. Its function is as follows. Catalyzes the reversible conversion of 2-phosphoglycerate (2-PG) into phosphoenolpyruvate (PEP). It is essential for the degradation of carbohydrates via glycolysis. This Nitratidesulfovibrio vulgaris (strain DSM 19637 / Miyazaki F) (Desulfovibrio vulgaris) protein is Enolase.